The following is a 332-amino-acid chain: Very-long-chain 3-oxoacyl-CoA reductase (332 aa).

The helical transmembrane segment at 15–35 (GQWALAGIGALYVATRVGAFL) threads the bilayer. NADP(+) is bound by residues Val-60, Asp-115, Asp-123, Asn-142, Lys-177, Tyr-209, Lys-213, Val-242, and Thr-244. Residue Tyr-209 is the Proton donor of the active site. Catalysis depends on Lys-213, which acts as the Lowers pKa of active site Tyr.

It belongs to the short-chain dehydrogenases/reductases (SDR) family.

The protein resides in the endoplasmic reticulum membrane. The enzyme catalyses a very-long-chain (3R)-3-hydroxyacyl-CoA + NADP(+) = a very-long-chain 3-oxoacyl-CoA + NADPH + H(+). Its pathway is lipid metabolism; fatty acid biosynthesis. Its function is as follows. Component of the microsomal membrane bound fatty acid elongation system, which produces the 26-carbon very long-chain fatty acids (VLCFA) from palmitate. Catalyzes the reduction of the 3-ketoacyl-CoA intermediate that is formed in each cycle of fatty acid elongation. VLCFAs serve as precursors for ceramide and sphingolipids. This Neurospora crassa (strain ATCC 24698 / 74-OR23-1A / CBS 708.71 / DSM 1257 / FGSC 987) protein is Very-long-chain 3-oxoacyl-CoA reductase.